Consider the following 146-residue polypeptide: Flavodoxin (146 aa).

Residues 4-143 (ALIVYGSTTG…EVLDWAREVL (140 aa)) enclose the Flavodoxin-like domain.

The protein belongs to the flavodoxin family. Requires FMN as cofactor.

Electron-transfer proteins that function in various electron transport systems in microorganisms. Functionally interchangeable with ferredoxin. The sequence is that of Flavodoxin from Megalodesulfovibrio gigas (strain ATCC 19364 / DSM 1382 / NCIMB 9332 / VKM B-1759) (Desulfovibrio gigas).